We begin with the raw amino-acid sequence, 377 residues long: MRVFVSSRRVKRWQFFHLFAICFILSFMVFWGPINNYIMSHMKSYSYRYLINSYDFVNDSLSLKHSSVQPHHPYLINHREKCQAQDVLLLLFIKTAPENYERRSAIRKTWGNENYVQSQLNANIKILFALGTPHPLKGKELQKRLIWEDQVYHDIIQQDFTDSFHNLTFKFLLQFGWANTFCPHARFLMTADDDIFIHMPNLIEYLQGLEQVGVRDFWIGHVHRGGPPVRDKSSKYYVPYEMYKWPAYPDYTAGAAYVVSNDVAAKIYEASQTLNSSMYIDDVFMGLCANKVGVVPQDHVFFSGEGKIPYHPCIYEKMITSHGHSQDLQDLWVEATDPKVKDISKGFFGQIYCRLIKIVLLCRLTYRNSYPCRAAFA.

Topologically, residues 1–14 are cytoplasmic; that stretch reads MRVFVSSRRVKRWQ. A helical; Signal-anchor for type II membrane protein transmembrane segment spans residues 15–35; that stretch reads FFHLFAICFILSFMVFWGPIN. Over 36 to 377 the chain is Lumenal; sequence NYIMSHMKSY…NSYPCRAAFA (342 aa). N-linked (GlcNAc...) asparagine glycosylation is present at Asn58.

This sequence belongs to the glycosyltransferase 31 family.

The protein localises to the golgi apparatus membrane. The catalysed reaction is a beta-D-Gal-(1-&gt;4)-beta-D-Glc-(1&lt;-&gt;1)-Cer(d18:1(4E)) + UDP-N-acetyl-alpha-D-glucosamine = a beta-D-GlcNAc-(1-&gt;3)-beta-D-Gal-(1-&gt;4)-beta-D-Glc-(1&lt;-&gt;1)-Cer(d18:1(4E)) + UDP + H(+). The enzyme catalyses a neolactoside nLc4Cer(d18:1(4E)) + UDP-N-acetyl-alpha-D-glucosamine = a neolactoside IV(3)-beta-GlcNAc-nLc4Cer(d18:1(4E)) + UDP + H(+). Its pathway is protein modification; protein glycosylation. Functionally, beta-1,3-N-acetylglucosaminyltransferase that plays a key role in the synthesis of lacto- or neolacto-series carbohydrate chains on glycolipids, notably by participating in biosynthesis of HNK-1 and Lewis X carbohydrate structures. Has strong activity toward lactosylceramide (LacCer) and neolactotetraosylceramide (nLc(4)Cer; paragloboside), resulting in the synthesis of Lc(3)Cer and neolactopentaosylceramide (nLc(5)Cer), respectively. Probably plays a central role in regulating neolacto-series glycolipid synthesis during embryonic development. This is Lactosylceramide 1,3-N-acetyl-beta-D-glucosaminyltransferase from Rattus norvegicus (Rat).